Here is a 338-residue protein sequence, read N- to C-terminus: MNNLYQRDCLRLLDFTSLELQNIITLAQKLKQYKKNNKEIQLLKKKNIALIFEKESTRTRCSFEVAAFDQGAHVTYLGPGSTHLGTKESIEDTAKILGRLYDGIQYRGHHHSTIEILAKNSKVPVWNGLTEKFHPTQLLADLLTIKEIFPERKFYEIKCAYVGDAHNNMGNSLLEAASLVGLDLRLVAPKECWPEKNIFKFCKEQMKNKKGNIICTENINEGVKNVDFIYTDVWVSMGESQEVWKKRIELLSSYQVNSLMLKITNNPQVKVLHCLPALHDQKTCTVKSILKKYGFKNGMEITDEVFQKNQKIIFEQAENRLHTIKAILVSSLLKTIKF.

Carbamoyl phosphate contacts are provided by residues 56-59 (STRT), Arg-107, and 134-137 (HPTQ). L-ornithine-binding positions include Asn-168, Asp-232, and 236–237 (SM). Carbamoyl phosphate contacts are provided by residues 274–275 (CL) and Arg-320.

It belongs to the aspartate/ornithine carbamoyltransferase superfamily. OTCase family.

It localises to the cytoplasm. The enzyme catalyses carbamoyl phosphate + L-ornithine = L-citrulline + phosphate + H(+). Its pathway is amino-acid biosynthesis; L-arginine biosynthesis; L-arginine from L-ornithine and carbamoyl phosphate: step 1/3. Functionally, reversibly catalyzes the transfer of the carbamoyl group from carbamoyl phosphate (CP) to the N(epsilon) atom of ornithine (ORN) to produce L-citrulline. The polypeptide is Ornithine carbamoyltransferase (argI) (Buchnera aphidicola subsp. Acyrthosiphon pisum (strain APS) (Acyrthosiphon pisum symbiotic bacterium)).